Consider the following 106-residue polypeptide: Guanyl-specific ribonuclease Th1 (106 aa).

2 disulfides stabilise this stretch: Cys5/Cys103 and Cys23/Cys84. His39 is a catalytic residue. Glu58 serves as the catalytic Proton acceptor. His92 acts as the Proton donor in catalysis.

This sequence belongs to the ribonuclease N1/T1 family.

It carries out the reaction [RNA] containing guanosine + H2O = an [RNA fragment]-3'-guanosine-3'-phosphate + a 5'-hydroxy-ribonucleotide-3'-[RNA fragment].. This is Guanyl-specific ribonuclease Th1 from Trichoderma harzianum (Hypocrea lixii).